The chain runs to 795 residues: MKFSELWLREWVNPAIDSDALANQITMAGLEVDGVEPVAGSFHGVVVGEVVECAQHPNADKLRVTKVNVGGDRLLDIVCGAPNCRQGLRVAVATIGAVLPGDFKIKAAKLRGEPSEGMLCSFSELGISDDHSGIIELPADAPIGTDIREYLKLDDNTIEISVTPNRADCLGIIGVARDVAVLNQLPLVQPEIVPVGATIDDTLPITVEAPEACPRYLGRVVKGINVKAPTPLWMKEKLRRCGIRSIDAVVDVTNYVLLELGQPMHAFDKDRIEGGIVVRMAKEGETLVLLDGTEAKLNADTLVIADHNKALAMGGIFGGEHSGVNDETQNVLLECAFFSPLSITGRARRHGLHTDASHRYERGVDPALQHKAMERATRLLIDICGGEAGPVIDITNEATLPKRATITLRRSKLDRLIGHHIADEQVTDILRRLGCEVTEGKDEWQAVAPSWRFDMEIEEDLVEEVARVYGYNNIPDEPVQASLIMGTHREADLSLKRVKTLLNDKGYQEVITYSFVDPKVQQMIHPGVEALLLPSPISVEMSAMRLSLWTGLLATVVYNQNRQQNRVRIFESGLRFVPDTQAPLGIRQDLMLAGVICGNRYEEHWNLAKETVDFYDLKGDLESVLDLTGKLNEVEFRAEANPALHPGQSAAIYLKGERIGFVGVVHPELERKLDLNGRTLVFELEWNKLADRVVPQAREISRFPANRRDIAVVVAENVPAADILSECKKVGVNQVVGVNLFDVYRGKGVAEGYKSLAISLILQDTSRTLEEEEIAATVAKCVEALKERFQASLRD.

The tRNA-binding domain maps to 39–148 (AGSFHGVVVG…ADAPIGTDIR (110 aa)). The region spanning 401–476 (PKRATITLRR…RVYGYNNIPD (76 aa)) is the B5 domain. Positions 454, 460, 463, and 464 each coordinate Mg(2+). One can recognise an FDX-ACB domain in the interval 701–794 (SRFPANRRDI…LKERFQASLR (94 aa)).

It belongs to the phenylalanyl-tRNA synthetase beta subunit family. Type 1 subfamily. As to quaternary structure, tetramer of two alpha and two beta subunits. Mg(2+) is required as a cofactor.

It is found in the cytoplasm. The catalysed reaction is tRNA(Phe) + L-phenylalanine + ATP = L-phenylalanyl-tRNA(Phe) + AMP + diphosphate + H(+). The polypeptide is Phenylalanine--tRNA ligase beta subunit (pheT) (Escherichia coli (strain K12)).